A 78-amino-acid chain; its full sequence is MIIPWQQVDSETLDNLLEAFVLREGTDYGEHERSLEQKVEDVRRQLVSGEAVLVWSELHETINIMPRGAFRAGAEELP.

Belongs to the UPF0270 family.

This Yersinia enterocolitica serotype O:8 / biotype 1B (strain NCTC 13174 / 8081) protein is UPF0270 protein YE3952.